A 107-amino-acid polypeptide reads, in one-letter code: Putative ankyrin repeat protein L14 (107 aa).

ANK repeat units lie at residues 19 to 48, 49 to 78, and 80 to 107; these read DNNY…NIRA, DNDC…NIRA, and NDCA…AVLS.

In Acanthamoeba polyphaga (Amoeba), this protein is Putative ankyrin repeat protein L14.